The sequence spans 99 residues: UPF0125 protein PM0166 (99 aa).

The protein belongs to the UPF0125 (RnfH) family.

This is UPF0125 protein PM0166 from Pasteurella multocida (strain Pm70).